The primary structure comprises 244 residues: Glutathione S-transferase theta-2 (244 aa).

In terms of domain architecture, GST N-terminal spans 2-82 (GLELYLDLLS…YLSSKYQVAD (81 aa)). Glutathione is bound by residues 40 to 41 (HL), 53 to 54 (KV), 66 to 67 (ES), and 104 to 107 (DNIR). The GST C-terminal domain occupies 88–230 (DLQARAQVHE…AKKTLPVPPP (143 aa)).

It belongs to the GST superfamily. Theta family. As to quaternary structure, homodimer. As to expression, highest values found in liver followed by testis, adrenal gland, kidney, lung, brain and skeletal muscle. In liver, highest expression found in central vein limiting plate hepatocytes. In lung, expressed mainly in club cells of the bronchiolar epithelium and, at low levels, in type II alveolar cells.

It is found in the cytoplasm. The protein resides in the cytosol. The protein localises to the nucleus. The catalysed reaction is RX + glutathione = an S-substituted glutathione + a halide anion + H(+). Its function is as follows. Catalyzes the inactivation of reactive sulfate esters in carcinogenic arylmethanols. Highest activity towards ethacrynic acid and cumene hydroperoxide. The protein is Glutathione S-transferase theta-2 (Gstt2) of Rattus norvegicus (Rat).